We begin with the raw amino-acid sequence, 2844 residues long: Sodium channel protein 60E (2844 aa).

The Cytoplasmic segment spans residues 1–121 (MSDDQATFND…WSPARRVCVY (121 aa)). The I repeat unit spans residues 107–434 (FLFYPWSPAR…FDPSVLNVKK (328 aa)). A helical transmembrane segment spans residues 122 to 145 (IATNQFFDYCVMATILFNCIFLAM). Over 146-151 (TETVEE) the chain is Extracellular. The helical transmembrane segment at 152–172 (AEYIFLAIYSIEMVIKIIAKG) threads the bilayer. The Cytoplasmic portion of the chain corresponds to 173-183 (FLLNKYTYLRN). Residues 184 to 202 (PWNWLDFVVITSGYATIGM) traverse the membrane as a helical segment. Over 203–208 (EVGNLA) the chain is Extracellular. The chain crosses the membrane as a helical; Voltage-sensor span at residues 209 to 228 (GLRTFRVLRALKTVSIMPGL). Topologically, residues 229-244 (KTIINALLHSFRQLAE) are cytoplasmic. A helical transmembrane segment spans residues 245-265 (VMTLTIFCLMVFALFALQVYM). The Extracellular portion of the chain corresponds to 266–340 (GELRNKCVRQ…PNHGYTNFDN (75 aa)). Cysteines 272 and 318 form a disulfide. N-linked (GlcNAc...) asparagine glycans are attached at residues N282, N293, and N311. Residues 341 to 365 (FMWSMLTTFQLITLDYWENVYNMVL) constitute an intramembrane region (pore-forming). Residues 366–374 (ATCGPMSVS) lie on the Extracellular side of the membrane. Residues 375–395 (FFTVVVFFGSFYLINLMLAVV) form a helical membrane-spanning segment. The Cytoplasmic portion of the chain corresponds to 396 to 687 (ALSYEEEAEI…QNCLYKVVRD (292 aa)). Positions 452–610 (ASYSKKKTRR…QDTTNDMGHV (159 aa)) are disordered. Over residues 455 to 465 (SKKKTRRKKTK) the composition is skewed to basic residues. The segment covering 469 to 479 (EGGTNGNGNGS) has biased composition (gly residues). Composition is skewed to low complexity over residues 511 to 520 (QAQKQYQQME) and 577 to 586 (SSNSSGVNRE). Residues 593–603 (GVVDDHEEQDT) are compositionally biased toward acidic residues. The II repeat unit spans residues 668 to 1130 (CTDYESWLQF…ESIELLGQYN (463 aa)). The chain crosses the membrane as a helical span at residues 688-708 (PLFELAITLCIVLNTAFLAME). Residues 709–718 (HHGMSESFRN) lie on the Extracellular side of the membrane. The chain crosses the membrane as a helical span at residues 719 to 743 (ALDVGNKVFTSIFTFECIVKLMALS). Residues 744 to 749 (KDFFLC) lie on the Cytoplasmic side of the membrane. A helical transmembrane segment spans residues 750 to 769 (GWNIFDLLIVTASLLDIIFE). Over 770–775 (LVDGLS) the chain is Extracellular. Residues 776–795 (VLRGLRLLRVLKLAQSWTTM) form a helical; Voltage-sensor membrane-spanning segment. Topologically, residues 796 to 810 (KVLLSIIISTIGALG) are cytoplasmic. The chain crosses the membrane as a helical span at residues 811 to 832 (NLTLILVIVIYIFAVIGMQLFS). Over 833 to 852 (KDYTPEKFDPDPVPRWNFND) the chain is Extracellular. Positions 853–873 (FFHSFMMIFRILCGEWIEPLW) form an intramembrane region, pore-forming. Topologically, residues 874–889 (DCMRAEEEQGASTCFA) are extracellular. C875 and C887 are disulfide-bonded. Residues 890–910 (IFLPTLVMGNFMVLNLFLALL) traverse the membrane as a helical segment. The Cytoplasmic portion of the chain corresponds to 911–1742 (LNSFNSEELK…SAKHWTRVRT (832 aa)). Residues 1129-1157 (YNSTDTDPYANDQRSGCGSFNRGDSLQDN) are compositionally biased toward polar residues. Disordered regions lie at residues 1129 to 1166 (YNST…GSEE), 1185 to 1224 (YRKS…NSMS), 1268 to 1288 (ISNV…ENET), 1577 to 1630 (APTP…ADAS), and 1635 to 1654 (LAMA…ATQK). Positions 1191–1203 (RLSQSSGQSQRSL) are enriched in low complexity. Positions 1204 to 1213 (LKSEEAEMRR) are enriched in basic and acidic residues. 3 stretches are compositionally biased toward polar residues: residues 1277 to 1286 (PSSQMGQPEN), 1604 to 1618 (PQST…QSAR), and 1640 to 1654 (KTEQ…ATQK). One copy of the III repeat lies at 1723–2040 (PWFMSCMDTQ…QKHYYTAMKK (318 aa)). The chain crosses the membrane as a helical span at residues 1743 to 1763 (AVLTVVDTPAFEWFVLVLIFA). The Extracellular portion of the chain corresponds to 1764–1789 (SSITLCFEDINLDKNKTLKRVLYWIN). 2 N-linked (GlcNAc...) asparagine glycosylation sites follow: N1778 and N1789. A helical membrane pass occupies residues 1790–1810 (FSFCLIFVVEMILKWLALGFS). At 1811–1813 (KYF) the chain is on the cytoplasmic side. The helical transmembrane segment at 1814 to 1834 (TSFWTILDFIIVFVSVFSLLI) threads the bilayer. Topologically, residues 1835-1839 (EENEN) are extracellular. The helical; Voltage-sensor transmembrane segment at 1840–1861 (LKVLRSLRTLRALRPLRAISRW) threads the bilayer. At 1862–1880 (QGMRIVVNALMYAIPSIFN) the chain is on the cytoplasmic side. Residues 1881 to 1902 (VLLVCLVFWLIFSIMGVQFFGG) traverse the membrane as a helical segment. Over 1903 to 1943 (KFFKCVNEMGELLPITEVNDKWDCIEQNYTWINSKITFDHV) the chain is Extracellular. N-linked (GlcNAc...) asparagine glycosylation occurs at N1930. The segment at residues 1944–1965 (GMGYLALLQVATFEGWMEVMAD) is an intramembrane region (pore-forming). Residues 1966-1981 (AVDARGVDLQPQREAN) lie on the Extracellular side of the membrane. The helical transmembrane segment at 1982-2002 (LYAYIYFVIFIVCGSFFTLNL) threads the bilayer. The Cytoplasmic segment spans residues 2003–2069 (FIGVIIDNFN…MFYDLSNSRR (67 aa)). The stretch at 2050–2311 (IKRPINHFLA…NMYIAIILEN (262 aa)) is one IV repeat. Residues 2070 to 2090 (FEIAIFVLIFLNMLTMGIEHY) traverse the membrane as a helical segment. Residues 2091–2095 (DQPHA) are Extracellular-facing. Residues 2096–2116 (VFFILEVSNAFFTTVFGLEAI) form a helical membrane-spanning segment. Over 2117–2132 (VKIVGLRYHYFTVPWN) the chain is Cytoplasmic. The chain crosses the membrane as a helical span at residues 2133-2153 (VFDFLLVLASIFGILMEDIMI). The Extracellular segment spans residues 2154-2162 (DLPISPTLL). A helical; Voltage-sensor transmembrane segment spans residues 2163 to 2184 (RVVRVFRIGRILRLIKAAKGIR). Over 2185–2199 (KLLFALVVSLPALFN) the chain is Cytoplasmic. A helical transmembrane segment spans residues 2200–2220 (IGALLGLITFIYAILGMSLFG). Topologically, residues 2221-2236 (NVKLQGALDDMVNFQT) are extracellular. Residues 2237–2259 (FGRSMQLLFRLMTSAGWNDVLES) constitute an intramembrane region (pore-forming). Over 2260–2288 (LMIQPPDCDPFIHGHTNGNCGHPLLAITY) the chain is Extracellular. The chain crosses the membrane as a helical span at residues 2289–2309 (FTSFIIISYMIVINMYIAIIL). Over 2310 to 2844 (ENFNQAHQEE…QFESLPDRQR (535 aa)) the chain is Cytoplasmic. An IQ domain is found at 2441 to 2470 (QEKAAKTIQTGWKEYLRRKREKERSNSGDS). 4 disordered regions span residues 2457–2479 (RRKR…SPGG), 2584–2668 (SLTS…LSAQ), 2780–2802 (DSPK…GAPI), and 2818–2844 (NPEK…DRQR). Polar residues predominate over residues 2467–2479 (SGDSATQTSSPGG). A compositionally biased stretch (low complexity) spans 2595-2632 (AMNNTTNTTSNSASTSGTASSTATAPATGCGPAATSAS). The span at 2647-2658 (SRKRASSFIRKK) shows a compositional bias: basic residues. Polar residues predominate over residues 2825–2836 (DQGNGQDETAQF).

The protein belongs to the sodium channel (TC 1.A.1.10) family. NaCP60E subfamily. In embryonic and larval stages, expression is limited to very few non-neuronal cells in either the CNS or PNS. In pupal and adult stages, expressed in cell bodies of the fly central nervous system, including optic lobes, central brain, subesophageal ganglion, thoracico-abdominal ganglion, major olfactory organs, the third antennal segment and the maxillary palps.

It localises to the cell membrane. Mediates the voltage-dependent sodium ion permeability of excitable membranes. Plays a role in processing of olfactory information during the olfactory avoidance response. The sequence is that of Sodium channel protein 60E (NaCP60E) from Drosophila melanogaster (Fruit fly).